We begin with the raw amino-acid sequence, 470 residues long: Sulfate adenylyltransferase subunit 1 (470 aa).

The tr-type G domain occupies 22 to 238 (KELLRFITCG…ETIKIDYAYT (217 aa)). The G1 stretch occupies residues 31–38 (GSVDDGKS). Residue 31 to 38 (GSVDDGKS) participates in GTP binding. A G2 region spans residues 89–93 (GITID). Residues 110–113 (DTPG) are G3. GTP is bound by residues 110 to 114 (DTPGH) and 165 to 168 (NKMD). Residues 165–168 (NKMD) are G4. Positions 202–204 (SAL) are G5.

The protein belongs to the TRAFAC class translation factor GTPase superfamily. Classic translation factor GTPase family. CysN/NodQ subfamily. Heterodimer composed of CysD, the smaller subunit, and CysN.

It carries out the reaction sulfate + ATP + H(+) = adenosine 5'-phosphosulfate + diphosphate. Its pathway is sulfur metabolism; hydrogen sulfide biosynthesis; sulfite from sulfate: step 1/3. Its function is as follows. With CysD forms the ATP sulfurylase (ATPS) that catalyzes the adenylation of sulfate producing adenosine 5'-phosphosulfate (APS) and diphosphate, the first enzymatic step in sulfur assimilation pathway. APS synthesis involves the formation of a high-energy phosphoric-sulfuric acid anhydride bond driven by GTP hydrolysis by CysN coupled to ATP hydrolysis by CysD. The sequence is that of Sulfate adenylyltransferase subunit 1 from Francisella tularensis subsp. tularensis (strain SCHU S4 / Schu 4).